Reading from the N-terminus, the 167-residue chain is NADH-quinone oxidoreductase subunit B (167 aa).

Residues cysteine 40, cysteine 41, cysteine 105, and cysteine 134 each contribute to the [4Fe-4S] cluster site.

Belongs to the complex I 20 kDa subunit family. As to quaternary structure, NDH-1 is composed of 14 different subunits. Subunits NuoB, C, D, E, F, and G constitute the peripheral sector of the complex. It depends on [4Fe-4S] cluster as a cofactor.

The protein resides in the cell inner membrane. The catalysed reaction is a quinone + NADH + 5 H(+)(in) = a quinol + NAD(+) + 4 H(+)(out). Functionally, NDH-1 shuttles electrons from NADH, via FMN and iron-sulfur (Fe-S) centers, to quinones in the respiratory chain. The immediate electron acceptor for the enzyme in this species is believed to be ubiquinone. Couples the redox reaction to proton translocation (for every two electrons transferred, four hydrogen ions are translocated across the cytoplasmic membrane), and thus conserves the redox energy in a proton gradient. This is NADH-quinone oxidoreductase subunit B from Campylobacter jejuni subsp. jejuni serotype O:2 (strain ATCC 700819 / NCTC 11168).